The chain runs to 113 residues: Protein suex-1 (113 aa).

A signal peptide spans 1–22; it reads MQSLLVFCLATIILSNFTEASA.

The chain is Protein suex-1 from Caenorhabditis elegans.